Consider the following 356-residue polypeptide: tRNA-specific 2-thiouridylase MnmA (356 aa).

Residues 6 to 13 (GMSGGVDS) and leucine 32 each bind ATP. Residue cysteine 102 is the Nucleophile of the active site. Cysteines 102 and 200 form a disulfide. ATP is bound at residue glycine 127. Positions 150–152 (RDQ) are interaction with tRNA. Cysteine 200 serves as the catalytic Cysteine persulfide intermediate. The tract at residues 302 to 303 (RY) is interaction with tRNA.

Belongs to the MnmA/TRMU family.

The protein localises to the cytoplasm. The enzyme catalyses S-sulfanyl-L-cysteinyl-[protein] + uridine(34) in tRNA + AH2 + ATP = 2-thiouridine(34) in tRNA + L-cysteinyl-[protein] + A + AMP + diphosphate + H(+). Catalyzes the 2-thiolation of uridine at the wobble position (U34) of tRNA, leading to the formation of s(2)U34. The polypeptide is tRNA-specific 2-thiouridylase MnmA (Aquifex aeolicus (strain VF5)).